Reading from the N-terminus, the 482-residue chain is Pentatricopeptide repeat-containing protein At1g74900, mitochondrial (482 aa).

PPR repeat units lie at residues 90-124, 125-159, 160-190, 194-228, 229-263, 264-298, 299-333, 334-368, 369-403, 404-441, and 442-476; these read DASS…RIGP, SPKT…GCFQ, DLAS…LRGR, DTVT…GINP, NLTT…DCEI, DVVT…GVLP, SVAT…GYEP, NVTT…GCEP, NFQT…DCLP, NLDT…GFIP, and RKFT…GSRL.

This sequence belongs to the PPR family. P subfamily.

The protein resides in the mitochondrion. Required for the trans-splicing of intron 1 of the mitochondrial nad1 transcript encoding the ND1 subunit of the mitochondrial membrane respiratory chain NADH dehydrogenase (Complex I). This is Pentatricopeptide repeat-containing protein At1g74900, mitochondrial (OTP43) from Arabidopsis thaliana (Mouse-ear cress).